A 359-amino-acid chain; its full sequence is DNA polymerase IV (359 aa).

The 182-residue stretch at 4 to 185 (IIHIDMDCYF…LSLRKIPGVG (182 aa)) folds into the UmuC domain. Positions 8 and 103 each coordinate Mg(2+). The active site involves E104.

This sequence belongs to the DNA polymerase type-Y family. In terms of assembly, monomer. Mg(2+) is required as a cofactor.

The protein resides in the cytoplasm. The enzyme catalyses DNA(n) + a 2'-deoxyribonucleoside 5'-triphosphate = DNA(n+1) + diphosphate. Poorly processive, error-prone DNA polymerase involved in untargeted mutagenesis. Copies undamaged DNA at stalled replication forks, which arise in vivo from mismatched or misaligned primer ends. These misaligned primers can be extended by PolIV. Exhibits no 3'-5' exonuclease (proofreading) activity. May be involved in translesional synthesis, in conjunction with the beta clamp from PolIII. This Shewanella sp. (strain ANA-3) protein is DNA polymerase IV.